A 247-amino-acid chain; its full sequence is Trypsin-4 (247 aa).

An N-terminal signal peptide occupies residues 1-15 (MKISIFFAFLGAAVA). A propeptide spans 16–23 (LPVNDDDK) (activation peptide). The region spanning 24 to 245 (IVGGYTCPKH…YLSWIQETMA (222 aa)) is the Peptidase S1 domain. Disulfide bonds link Cys-30/Cys-161, Cys-49/Cys-65, Cys-133/Cys-234, Cys-140/Cys-207, Cys-172/Cys-186, and Cys-197/Cys-221. The active-site Charge relay system is His-64. Ca(2+) is bound by residues Glu-76, Asn-78, Val-81, and Glu-86. The Charge relay system role is filled by Asp-108. Ser-201 acts as the Charge relay system in catalysis.

This sequence belongs to the peptidase S1 family. Ca(2+) is required as a cofactor. Post-translationally, proteolytically cleaved and activated by an autocatalytic mechanism. Cleavage by CTRC inhibits autoactivation.

It is found in the secreted. The protein resides in the extracellular space. The enzyme catalyses Preferential cleavage: Arg-|-Xaa, Lys-|-Xaa.. Its activity is regulated as follows. Activated by autocatalytic cleavage. Cleavage by CTRC inhibits autoactivation. Its function is as follows. Serine protease capable of autoactivation. The protein is Trypsin-4 of Rattus norvegicus (Rat).